The following is a 430-amino-acid chain: Inactive metallocarboxypeptidase ECM14 (430 aa).

A signal peptide spans 1 to 24; sequence MLHMNSLWGCFLFVLLAVTGAVQG. A propeptide spanning residues 25 to 105 is cleaved from the precursor; sequence LQEDYSEYAV…TLPTSQMMAR (81 aa). N-linked (GlcNAc...) asparagine glycosylation is present at N41. A Peptidase M14 domain is found at 120-425; it reads EYRDLDTIYM…AALKYFCDFL (306 aa). The Zn(2+) site is built by H182 and E185. Substrate is bound by residues 182–185, R240, and 257–258; these read HARE and DH. A disulfide bond links C251 and C272. An N-linked (GlcNAc...) asparagine glycan is attached at N295. Residue H310 participates in Zn(2+) binding. A substrate-binding site is contributed by 311 to 312; that stretch reads SY.

The protein belongs to the peptidase M14 family. Zn(2+) is required as a cofactor. In terms of processing, N-glycosylated.

The protein localises to the vacuole. It localises to the secreted. Functionally, inactive carboxypeptidase that may play a role in cell wall organization and biogenesis. The polypeptide is Inactive metallocarboxypeptidase ECM14 (Saccharomyces cerevisiae (strain ATCC 204508 / S288c) (Baker's yeast)).